A 399-amino-acid polypeptide reads, in one-letter code: Elongation factor Tu (399 aa).

The tr-type G domain occupies 10 to 204; the sequence is KPHVNIGTIG…SVDESIPEPE (195 aa). The interval 19-26 is G1; it reads GHVDHGKT. 19 to 26 lines the GTP pocket; that stretch reads GHVDHGKT. Threonine 26 is a binding site for Mg(2+). The G2 stretch occupies residues 60-64; the sequence is GITIN. The interval 81 to 84 is G3; the sequence is DCPG. GTP is bound by residues 81 to 85 and 136 to 139; these read DCPGH and NKCD. Residues 136–139 form a G4 region; that stretch reads NKCD. The interval 174–176 is G5; the sequence is SAL.

The protein belongs to the TRAFAC class translation factor GTPase superfamily. Classic translation factor GTPase family. EF-Tu/EF-1A subfamily. As to quaternary structure, monomer.

Its subcellular location is the cytoplasm. It catalyses the reaction GTP + H2O = GDP + phosphate + H(+). GTP hydrolase that promotes the GTP-dependent binding of aminoacyl-tRNA to the A-site of ribosomes during protein biosynthesis. The sequence is that of Elongation factor Tu from Prochlorococcus marinus (strain MIT 9211).